Reading from the N-terminus, the 525-residue chain is Histidine-rich glycoprotein (525 aa).

The signal sequence occupies residues 1 to 18 (MKALIAALLLITLQYSCA). Cystatin domains are found at residues 19–136 (VSPT…SALA) and 137–254 (NTKD…NING). 5 disulfide bridges follow: Cys-24–Cys-504, Cys-78–Cys-89, Cys-105–Cys-126, Cys-203–Cys-417, and Cys-218–Cys-241. Residues 41-84 (RRRDGYLFQLLRIADAHLDRVENTTVYYLVLDVQESDCSVLSRK) form an interaction with ATP5F1A region. Asn-63 carries N-linked (GlcNAc...) asparagine glycosylation. Asn-125 is a glycosylation site (N-linked (GlcNAc...) asparagine). Positions 252 to 407 (INGVPPHLGH…GHHPHGHHPH (156 aa)) are disordered. Basic residues predominate over residues 284–293 (RDHHHPHKPH). Positions 310 to 320 (PPLPQGPPPLL) are enriched in pro residues. Positions 323-348 (SCSSCQHATFGTNGAQRHSHNNNSSD) are enriched in polar residues. Asn-344 and Asn-345 each carry an N-linked (GlcNAc...) asparagine glycan. A necessary for endothelial cell focal adhesions and anti-angiogenic activities region spans residues 348-382 (DLHPHKHHSHEQHPHGHHPHAHHPHEHDTHRQHPH). 2 stretches are compositionally biased toward basic residues: residues 351–371 (PHKH…AHHP) and 379–407 (QHPH…HHPH).

Interacts (via the HRR domain) with TPM1; the interaction appears to contribute to the antiangiogenic properties of the HRR domain. Interacts with THBS2; the interaction blocks the antiangiogenic effect of THBS2 with CD36. Interacts with THBS1 (via the TSP type I repeats); the interaction blocks the antiangiogenic effect of THBS1 with CD3. Interacts with PLG (via its Kringle domains); the interaction tethers PLG to the cell surface and enhances its activation. Interacts with HPSE; the interaction is enhanced at acidic pH, partially inhibits binding of HPSE to cell surface receptors and modulates its enzymatic activity. Interacts (via the HRR domain) with TMP1; the interaction partially mediates the antiangiogenic properties of HRG. Interacts with kappa and lambda light chains of IgG molecules. Interacts with ATP5F1A; the interaction occurs on the surface of T-cells and alters their cell morphology in concert with CONA. Binds IgG molecules containing kappa and lambda light chains and inhibits the formation of insoluble immunoglobulin complexes. Interacts with F12; the interaction, which is enhanced in the presence of zinc ions and inhibited by heparin-binding to HRG, inhibits factor XII autoactivation and contact-initiated coagulation. Zn(2+) is required as a cofactor. Proteolytic cleavage produces several HRG fragments which are mostly disulfide-linked and, therefore, not released. Cleavage by plasmin is inhibited in the presence of heparin, zinc ions or in an acidic environment. Cleavage reduces binding of HRG to heparan sulfate, but enhances the ability of HRG to bind and tether plasminogen to the cell surface. On platelet activation, releases a 33 kDa antiangiogenic peptide which encompasses the HRR. Also cleaved in the C-terminal by plasmin. In terms of processing, N-glycosylated. Expressed in macrophages and in malignant cells. Expressed by the liver and secreted in plasma (at protein level).

It is found in the secreted. In terms of biological role, plasma glycoprotein that binds a number of ligands such as heme, heparin, heparan sulfate, thrombospondin, plasminogen, and divalent metal ions. Binds heparin and heparin/glycosaminoglycans in a zinc-dependent manner. Binds heparan sulfate on the surface of liver, lung, kidney and heart endothelial cells. Binds to N-sulfated polysaccharide chains on the surface of liver endothelial cells. Inhibits rosette formation. Acts as an adapter protein and is implicated in regulating many processes such as immune complex and pathogen clearance, cell chemotaxis, cell adhesion, angiogenesis, coagulation and fibrinolysis. Mediates clearance of necrotic cells through enhancing the phagocytosis of necrotic cells in a heparan sulfate-dependent pathway. This process can be regulated by the presence of certain HRG ligands such as heparin and zinc ions. Binds to IgG subclasses of immunoglobins containing kappa and lambda light chains with different affinities regulating their clearance and inhibiting the formation of insoluble immune complexes. Tethers plasminogen to the cell surface. Binds T-cells and alters the cell morphology. Modulates angiogenesis by blocking the CD6-mediated antiangiongenic effect of thrombospondins, THBS1 and THBS2. Acts as a regulator of the vascular endothelial growth factor (VEGF) signaling pathway; inhibits endothelial cell motility by reducing VEGF-induced complex formation between PXN/paxillin and ILK/integrin-linked protein kinase and by promoting inhibition of VEGF-induced tyrosine phosphorylation of focal adhesion kinases and alpha-actinins in endothelial cells. Also plays a role in the regulation of tumor angiogenesis and tumor immune surveillance. Normalizes tumor vessels and promotes antitumor immunity by polarizing tumor-associated macrophages, leading to decreased tumor growth and metastasis. This is Histidine-rich glycoprotein (HRG) from Homo sapiens (Human).